A 268-amino-acid chain; its full sequence is Helix-loop-helix protein 6 (268 aa).

The segment covering 117-130 (QSQVQPQLPTQSQP) has biased composition (low complexity). The segment at 117–140 (QSQVQPQLPTQSQPKPSSKASLDT) is disordered. Residues 131-140 (KPSSKASLDT) show a composition bias toward polar residues. The bHLH domain occupies 173–225 (SSVWKRNERERCRVRNVNDGYERLRKHLPVHFDEKRISKVDTLRLAIRYIKHL).

As to expression, expressed in the gland cells of the pharynx and weakly in the pharyngeal neuron.

It is found in the nucleus. Functionally, transcription factor that regulates the development of the g2 pharyngeal gland cells and pharyngeal gland function and thereby is required for feeding. Required for the expression of a number of genes in the pharyngeal gland, possibly by binding to the E box motif (5'-CANNTG-3') in the promoter region of these genes. Positively regulates the expression of genes encoding mucin-like proteins, which lubricate the pharyngeal tract to ensure efficient passage of the bacterial food source. Exhibits pharyngeal gland-specific positive autoregulation activity. The protein is Helix-loop-helix protein 6 (hlh-6) of Caenorhabditis elegans.